We begin with the raw amino-acid sequence, 999 residues long: Sarcoplasmic/endoplasmic reticulum calcium ATPase 3 (999 aa).

At 1 to 48 (MEAAHSVPVQDVLSRFGVAESCGLSPEQVRRNREKYGPNELPAEERKS) the chain is on the cytoplasmic side. The chain crosses the membrane as a helical span at residues 49–69 (LWELVLEQFEDLLVRILLMAA). Over 70–89 (FLSFILAWFEEGEESTTAFV) the chain is Lumenal. The chain crosses the membrane as a helical span at residues 90–110 (EPIVIIMILIANAVVGVWQER). The Cytoplasmic segment spans residues 111–253 (NAESAIEALK…PEKTPLQQKL (143 aa)). A helical membrane pass occupies residues 254 to 273 (DEFSQQLSKVIFLVCIAVWV). Residues 274–295 (INISHFSDPVHGGSWFRGAIYY) are Lumenal-facing. The chain crosses the membrane as a helical span at residues 296 to 313 (FKTSVALAVAAIPEGLPA). Ca(2+) contacts are provided by V304, A305, I307, and E309. Topologically, residues 314–757 (VITTCLALGT…EEGRAIYNNM (444 aa)) are cytoplasmic. D351 serves as the catalytic 4-aspartylphosphate intermediate. Mg(2+) is bound by residues D351 and T353. Residue T353 coordinates ATP. The tract at residues 370 to 400 (EKVEGTQCSLHEFSITGSTYAPEGQILKDEK) is interaction with phospholamban 1. The ATP site is built by E442, R489, K515, R560, T625, G626, D627, R678, and K684. D703 is a binding site for Mg(2+). N706 lines the ATP pocket. Residues 758–777 (KQFIRYLISSNVGEVVCIFL) traverse the membrane as a helical segment. Residues N768 and E771 each contribute to the Ca(2+) site. Topologically, residues 778 to 787 (TAILGLPEAL) are lumenal. The helical transmembrane segment at 788–808 (IPVQLLWVNLVTDGLPATALG) threads the bilayer. Residues 788–808 (IPVQLLWVNLVTDGLPATALG) form an interaction with phospholamban 2 region. Ca(2+)-binding residues include N796, T799, and D800. At 809-828 (FNPPDLDIMDKLPRNPKEPL) the chain is on the cytoplasmic side. The helical transmembrane segment at 829–851 (ISGWLFFRYLAIGVYVGLATVGA) threads the bilayer. Residues 852-897 (ATWWFLYDAEGPQVSFHQLRNFMRCTEDNPIFEGVNCEIFESRYPT) are Lumenal-facing. The chain crosses the membrane as a helical span at residues 898–917 (TMALSVLVTIEMCNALNSVS). E908 is a Ca(2+) binding site. Residues 918–930 (ENQSLLRMPPWLN) lie on the Cytoplasmic side of the membrane. The helical transmembrane segment at 931–949 (IWLLGAIVMSMALHFFILY) threads the bilayer. Over 950–964 (VKPMPLIFQVTPLSW) the chain is Lumenal. The helical transmembrane segment at 965 to 985 (PQWVVVLKISLPVILLDEGLK) threads the bilayer. Residues 986-999 (YLSRNHLEGEEDKK) lie on the Cytoplasmic side of the membrane.

Belongs to the cation transport ATPase (P-type) (TC 3.A.3) family. Type IIA subfamily. As to quaternary structure, interacts with sarcolipin (SLN). Interacts with phospholamban (PLN). Interacts with myoregulin (MRLN). Interacts with DWORF. Mg(2+) is required as a cofactor. As to expression, found in spleen, lung, intestine and brain.

It is found in the endoplasmic reticulum membrane. The protein resides in the sarcoplasmic reticulum membrane. The enzyme catalyses Ca(2+)(in) + ATP + H2O = Ca(2+)(out) + ADP + phosphate + H(+). Its activity is regulated as follows. Inhibited by sarcolipin (SLN), phospholamban (PLN) and myoregulin (MRLN). Enhanced by DWORF; DWORF increases activity by displacing sarcolipin (SLN), phospholamban (PLN) and myoregulin (MRLN). In terms of biological role, this magnesium-dependent enzyme catalyzes the hydrolysis of ATP coupled with the transport of calcium. Transports calcium ions from the cytosol into the sarcoplasmic/endoplasmic reticulum lumen. Contributes to calcium sequestration involved in muscular excitation/contraction. The chain is Sarcoplasmic/endoplasmic reticulum calcium ATPase 3 (ATP2A3) from Gallus gallus (Chicken).